The sequence spans 159 residues: Ribosomal RNA large subunit methyltransferase H (159 aa).

S-adenosyl-L-methionine contacts are provided by residues leucine 76, glycine 107, and 126–131 (LSSLTL).

The protein belongs to the RNA methyltransferase RlmH family. As to quaternary structure, homodimer.

Its subcellular location is the cytoplasm. It catalyses the reaction pseudouridine(1915) in 23S rRNA + S-adenosyl-L-methionine = N(3)-methylpseudouridine(1915) in 23S rRNA + S-adenosyl-L-homocysteine + H(+). Functionally, specifically methylates the pseudouridine at position 1915 (m3Psi1915) in 23S rRNA. The sequence is that of Ribosomal RNA large subunit methyltransferase H from Cupriavidus pinatubonensis (strain JMP 134 / LMG 1197) (Cupriavidus necator (strain JMP 134)).